The following is a 698-amino-acid chain: Glycine--tRNA ligase beta subunit (698 aa).

It belongs to the class-II aminoacyl-tRNA synthetase family. Tetramer of two alpha and two beta subunits.

It localises to the cytoplasm. It catalyses the reaction tRNA(Gly) + glycine + ATP = glycyl-tRNA(Gly) + AMP + diphosphate. This Xanthomonas campestris pv. campestris (strain 8004) protein is Glycine--tRNA ligase beta subunit.